The following is a 562-amino-acid chain: Glutamyl-tRNA(Gln) amidotransferase subunit B, chloroplastic/mitochondrial (562 aa).

A disordered region spans residues 48–76 (SVASNSKREPRPVKTRVMTQERGSGETQT). The span at 64 to 76 (VMTQERGSGETQT) shows a compositional bias: polar residues.

Belongs to the GatB/GatE family. GatB subfamily. As to quaternary structure, subunit of the heterotrimeric GatCAB amidotransferase (AdT) complex, composed of A, B and C subunits.

It localises to the mitochondrion. The protein localises to the plastid. The protein resides in the chloroplast. The catalysed reaction is L-glutamyl-tRNA(Gln) + L-glutamine + ATP + H2O = L-glutaminyl-tRNA(Gln) + L-glutamate + ADP + phosphate + H(+). In terms of biological role, allows the formation of correctly charged Gln-tRNA(Gln) through the transamidation of misacylated Glu-tRNA(Gln) in chloroplasts and mitochondria. The reaction takes place in the presence of glutamine and ATP through an activated gamma-phospho-Glu-tRNA(Gln). In Physcomitrium patens (Spreading-leaved earth moss), this protein is Glutamyl-tRNA(Gln) amidotransferase subunit B, chloroplastic/mitochondrial.